The primary structure comprises 827 residues: Glycerol-3-phosphate acyltransferase (827 aa).

Residues 325 to 330 (CHRSHM) carry the HXXXXD motif motif.

This sequence belongs to the GPAT/DAPAT family.

Its subcellular location is the cell inner membrane. It catalyses the reaction sn-glycerol 3-phosphate + an acyl-CoA = a 1-acyl-sn-glycero-3-phosphate + CoA. The protein operates within phospholipid metabolism; CDP-diacylglycerol biosynthesis; CDP-diacylglycerol from sn-glycerol 3-phosphate: step 1/3. The chain is Glycerol-3-phosphate acyltransferase from Shigella boydii serotype 4 (strain Sb227).